Consider the following 429-residue polypeptide: Glutamyl-tRNA reductase (429 aa).

Residues 52-55 (TCNR), serine 110, 115-117 (EAQ), and glutamine 121 contribute to the substrate site. Cysteine 53 acts as the Nucleophile in catalysis. 190-195 (GAGAMI) contacts NADP(+).

Belongs to the glutamyl-tRNA reductase family. Homodimer.

It carries out the reaction (S)-4-amino-5-oxopentanoate + tRNA(Glu) + NADP(+) = L-glutamyl-tRNA(Glu) + NADPH + H(+). It functions in the pathway porphyrin-containing compound metabolism; protoporphyrin-IX biosynthesis; 5-aminolevulinate from L-glutamyl-tRNA(Glu): step 1/2. Its function is as follows. Catalyzes the NADPH-dependent reduction of glutamyl-tRNA(Glu) to glutamate 1-semialdehyde (GSA). The sequence is that of Glutamyl-tRNA reductase from Verminephrobacter eiseniae (strain EF01-2).